We begin with the raw amino-acid sequence, 129 residues long: DNA base-flipping protein (129 aa).

It belongs to the MGMT family. ATL subfamily. As to quaternary structure, interacts with HelD and UvrA.

In terms of biological role, involved in DNA damage recognition. Binds DNA containing O(6)-methylguanine and larger O(6)-alkylguanine adducts, and to double-stranded DNA that contains an AP (apurinic/apyrimidinic) site. Binds to the damaged base and flips the base out of the DNA duplex into an extrahelical conformation, which allows processing by repair proteins. Works in partnership with the nucleotide excision repair (NER) pathway to enhance the repair of the O(6)-alkylguanine adducts larger than the methyl adduct. Also prevents methyl-directed mismatch repair (MMR)-mediated attack of the O(6)-alkylguanine:T mispairs for the larger alkyl groups. This Escherichia coli (strain K12) protein is DNA base-flipping protein.